A 312-amino-acid polypeptide reads, in one-letter code: Small ribosomal subunit protein RACK1 (312 aa).

WD repeat units lie at residues 9-42 (GHRGWVTSLACPQQAGSYIKVVSTSRDGTVISWK), 63-93 (GHTGFVSCVSLAHATDYALTASWDRSIRMWD), 105-135 (KHTKDVLAVAFSPDDRLIVSAGRDNVIRVWN), 148-180 (GHEDWVSSICFSPSLEHPIVVSGSWDNTIKVWN), 192-222 (GHSNYVSTVTVSPDGSLCASGGKDGAALLWD), 233-262 (NVESPINQIGFSPNRFWMCVATERSLSVYD), and 279-307 (PSECISIAWSADGNTLYSGHKDNLIRVWS).

Belongs to the WD repeat G protein beta family. Ribosomal protein RACK1 subfamily.

The sequence is that of Small ribosomal subunit protein RACK1 from Leishmania major.